Consider the following 311-residue polypeptide: DNA-directed RNA polymerase subunit alpha (311 aa).

The segment at 1 to 227 is alpha N-terminal domain (alpha-NTD); it reads MAQFQIECVE…NLFCSLRNLD (227 aa). An alpha C-terminal domain (alpha-CTD) region spans residues 242 to 311; it reads ISQVLIEELQ…GISLPKEKTD (70 aa).

The protein belongs to the RNA polymerase alpha chain family. In plastids the minimal PEP RNA polymerase catalytic core is composed of four subunits: alpha, beta, beta', and beta''. When a (nuclear-encoded) sigma factor is associated with the core the holoenzyme is formed, which can initiate transcription.

It is found in the plastid. Its subcellular location is the chloroplast. The catalysed reaction is RNA(n) + a ribonucleoside 5'-triphosphate = RNA(n+1) + diphosphate. Functionally, DNA-dependent RNA polymerase catalyzes the transcription of DNA into RNA using the four ribonucleoside triphosphates as substrates. The polypeptide is DNA-directed RNA polymerase subunit alpha (Porphyra purpurea (Red seaweed)).